A 95-amino-acid chain; its full sequence is Small ribosomal subunit protein bS6 (95 aa).

It belongs to the bacterial ribosomal protein bS6 family.

Its function is as follows. Binds together with bS18 to 16S ribosomal RNA. This chain is Small ribosomal subunit protein bS6, found in Corynebacterium diphtheriae (strain ATCC 700971 / NCTC 13129 / Biotype gravis).